The sequence spans 238 residues: Purine nucleoside phosphorylase DeoD-type (238 aa).

An a purine D-ribonucleoside-binding site is contributed by His-4. Phosphate-binding positions include Gly-20, Arg-24, Arg-43, and 87-90 (RIGS). Residues 181-183 (EME) and 205-206 (SD) contribute to the a purine D-ribonucleoside site. Asp-206 (proton donor) is an active-site residue.

The protein belongs to the PNP/UDP phosphorylase family. Homohexamer; trimer of homodimers.

The catalysed reaction is a purine D-ribonucleoside + phosphate = a purine nucleobase + alpha-D-ribose 1-phosphate. The enzyme catalyses a purine 2'-deoxy-D-ribonucleoside + phosphate = a purine nucleobase + 2-deoxy-alpha-D-ribose 1-phosphate. Catalyzes the reversible phosphorolytic breakdown of the N-glycosidic bond in the beta-(deoxy)ribonucleoside molecules, with the formation of the corresponding free purine bases and pentose-1-phosphate. The sequence is that of Purine nucleoside phosphorylase DeoD-type from Mycoplasma genitalium (strain ATCC 33530 / DSM 19775 / NCTC 10195 / G37) (Mycoplasmoides genitalium).